A 199-amino-acid chain; its full sequence is uncharacterized protein (199 aa).

A run of 4 helical transmembrane segments spans residues 35-55 (CELA…IFYD), 57-77 (FVIF…YLEF), 94-114 (LSAA…IFFG), and 131-151 (YYGC…ASFA).

The protein localises to the membrane. This is an uncharacterized protein from Caenorhabditis elegans.